The following is a 1541-amino-acid chain: Multiple epidermal growth factor-like domains protein 6 (1541 aa).

Positions 1-30 (MSFLEEARAAGRAVVLALVLLLLPAVPVGA) are cleaved as a signal peptide. Positions 44–125 (MPHVCAEQEL…QQPDEEGCLS (82 aa)) constitute an EMI domain. 15 cysteine pairs are disulfide-bonded: C48–C111, C77–C83, C110–C123, C128–C139, C133–C147, C149–C158, C165–C176, C172–C185, C187–C200, C242–C255, C248–C268, C270–C283, C289–C300, C296–C309, and C311–C324. In terms of domain architecture, EGF-like 1 spans 124-159 (LSAECSASLCFHGGRCVPGSAQPCHCPPGFQGPRCQ). The region spanning 161–201 (DVDECRTHNGGCQHRCVNTPGSYLCECKPGFRLHTDSRTCL) is the EGF-like 2; calcium-binding domain. 2 consecutive EGF-like domains span residues 206–242 (CALGNGGCQHHCVQLTITRHRCQCRPGFQLQEDGRHC) and 238–284 (DGRH…KACE). N-linked (GlcNAc...) asparagine glycosylation occurs at N252. One can recognise an EGF-like 5; calcium-binding domain in the interval 285 to 325 (DVDECAAGLAQCAHGCLNTQGSFKCVCHAGYELGADGRQCY). 2 consecutive EGF-like domains span residues 335–370 (CEANNGGCSHGCSHTSAGPLCTCPRGYELDTDQRTC) and 375–411 (DCADSPCCQQVCTNNPGGYECGCYAGYRLSADGCGCE). In terms of domain architecture, EGF-like 8; calcium-binding spans 412–452 (DVDECASSRGGCEHHCTNLAGSFQCSCEAGYRLHEDRRGCS). Cystine bridges form between C416–C427, C423–C436, C438–C451, C520–C533, C527–C540, C542–C551, C564–C576, C570–C583, C585–C594, C607–C619, C613–C626, and C628–C637. EGF-like domains are found at residues 516–552 (FGHDCSLTCDDCRNGGTCLLGLDGCDCPEGWTGLICN), 560–595 (FGKNCSFSCSCQNGGTCDSVTGACRCPPGVSGTNCE), 603–638 (YGKHCRKKCNCANRGRCHRLYGACLCDPGLYGRFCH), 736–770 (FGVNCSSSCSCGGAPCHGVTGQCRCPPGRTGEDCE), 783–814 (QEICPACQHAARCDPETGACLCLPGFVGSRCQ), 822–857 (YGPSCQTRCSCANDGHCHPATGHCSCAPGWTGFSCQ), 865–901 (WGPDCSHPCNCSAGHGSCDAISGLCLCEAGYVGPRCE), 909–944 (FGPGCEQRCQCQHGAACDHVSGACTCPAGWRGTFCE), 955–987 (DCRSACNCTAGAACDAVNGSCLCPAGRRGPRCA), 995–1030 (YGHNCSQACACFNGASCDPVHGQCHCAPGWMGPSCL), 1038–1073 (YGDNCRHSCLCQNGGTCDPVSGHCACPEGWAGLACE), 1081–1116 (VRAGCRHSGGCLNGGLCDPHTGRCLCPAGWTGDKCQ), 1124–1159 (FGEACAQRCSCPPGAACHHVTGACRCPPGFTGSGCE), 1211–1246 (YGPGCEQLCGCLNGGSCDAATGACRCPTGFLGTDCN), 1254–1289 (FGPNCTHVCGCGQGAACDPVTGTCLCPPGRAGVRCE), 1297–1332 (FGVGCEHTCSCRNGGLCHASNGSCSCGLGWTGRHCE), 1345–1375 (HLECSCHNNSTCEPATGTCRCGPGFYGQACE), 1383–1418 (HGAGCQGLCWCQHGAPCDPISGRCLCPAGFHGHFCE), and 1469–1504 (FGPSCTLHCDCGGGADCDPVSGQCHCVDGYMGPTCR). N739 is a glycosylation site (N-linked (GlcNAc...) asparagine). Intrachain disulfides connect C740–C751, C744–C758, C760–C769, C786–C795, C789–C802, C804–C813, C826–C838, C832–C845, C847–C856, C869–C882, C873–C889, C891–C900, C913–C925, C919–C932, and C934–C943. Intrachain disulfides connect C999/C1011, C1005/C1018, C1020/C1029, C1042/C1054, C1048/C1061, C1063/C1072, C1085/C1097, C1091/C1104, C1106/C1115, C1128/C1140, C1134/C1147, C1149/C1158, C1215/C1227, C1221/C1234, C1236/C1245, C1258/C1270, C1264/C1277, C1279/C1288, C1301/C1313, C1307/C1320, C1322/C1331, C1348/C1356, C1350/C1363, C1365/C1374, C1387/C1399, C1393/C1406, C1408/C1417, C1473/C1485, C1479/C1492, and C1494/C1503. Positions 1509–1541 (LRLPENPSLAQGSAGTLPASSRPTSRSGGPARH) are disordered. Polar residues predominate over residues 1516–1535 (SLAQGSAGTLPASSRPTSRS).

It localises to the secreted. The chain is Multiple epidermal growth factor-like domains protein 6 (MEGF6) from Homo sapiens (Human).